We begin with the raw amino-acid sequence, 204 residues long: MSAAVAASSGAPAADVEKGAAAADANVDGGGAPAAAAASGEGVVSAVVRRWRRQDLLEKSGSALRVAAWAFSLLAFVVMGANDHGDWRQFEHYEEYRYVVAIGVLAFIYTTLQLVRHGVRLTGGQDLQGKVAVLVDFAGDQVTAYLLMSAVSAAIPITNRMREGADNVFTDSSAASISMAFFAFLCLALSALVSGFKLAKQTYI.

At 1 to 60 (MSAAVAASSGAPAADVEKGAAAADANVDGGGAPAAAAASGEGVVSAVVRRWRRQDLLEKS) the chain is on the cytoplasmic side. A helical transmembrane segment spans residues 61-81 (GSALRVAAWAFSLLAFVVMGA). The Extracellular segment spans residues 82-98 (NDHGDWRQFEHYEEYRY). A helical transmembrane segment spans residues 99–119 (VVAIGVLAFIYTTLQLVRHGV). The Cytoplasmic segment spans residues 120-130 (RLTGGQDLQGK). A helical membrane pass occupies residues 131–151 (VAVLVDFAGDQVTAYLLMSAV). Over 152 to 175 (SAAIPITNRMREGADNVFTDSSAA) the chain is Extracellular. A helical transmembrane segment spans residues 176 to 196 (SISMAFFAFLCLALSALVSGF). The Cytoplasmic segment spans residues 197 to 204 (KLAKQTYI).

This sequence belongs to the Casparian strip membrane proteins (CASP) family. In terms of assembly, homodimer and heterodimers.

It is found in the cell membrane. This is CASP-like protein 4B4 from Oryza sativa subsp. japonica (Rice).